Reading from the N-terminus, the 798-residue chain is MASLSTMHLINHSPASRRRIMSAAAAAAAKLHLPECFTITKSAWMNNTENLTLNYQLNHKKISKVAGINRVATVDAPQVHDQDDSTENQGHDAVNNIEDPIEYIRTLLRTTGDGRISVSPYDTAWVALIKDLNGRDAPEFPSSLEWIVRNQLDDGSWGDDKFFCVYDRLVNTIACVVALRSWNVHDDKLKRGVTYIKENVEKLRDGNVEHMTCGFEVVFTALLQRAKCLGIEDLPYDSPLIQEIYHSRQQKLNRIPMEMMHKVPTSLLFSLEGLENLEWERLLKLQSADGSFLTSPSSTAFAFMQTKDEKCYQFIKNTVETFNGGAPHTYPVDVFGRLWAVDRLQRLGISRFFESEIAECLAHIHKFWTEKGVFSGRESEFCDIDDTSMGIRLLRMHGYDVDPNVLRNFKKDDNFSCYGGQMIESPSPIYNLYRASQLRFPGEEILEDANKFAYNFLQEKLANNQILDKWVISKHLPDEIKLGMEMPWYATLPRVEARYYLQYYAGSGDVWIGKTLYRMPEISNDTYHELAKTDFKRCQAQHQFEWIYMQEWYESCNVEEFGISRKELLLAYFLATASIFELEKTKERIAWAKSQIISKMITSFFNNHNTSSEEKLAFLTDFRNSNGLNNTNMVLATLTQFLEGFNRYTSHQLKNAWGEWLAKLQQGEGDGAADAELLTNTLNICAGHIAFREEILSHNEYTTLSNLTSKICQQLSQIQNEKKMEIEGQMTAETSIKNKELEQDMQTLVKLVLGKSSGINRNIKKTFLAVAKTYYYRAYHDAQTIDTHMFKVLFEPVV.

A chloroplast-targeting transit peptide spans 1-72 (MASLSTMHLI…SKVAGINRVA (72 aa)). Lys-251 contributes to the substrate binding site. Residues Asp-383 and Asp-385 each coordinate Mg(2+). The short motif at 383 to 386 (DIDD) is the DXDD motif element. Lys-469 lines the substrate pocket.

It belongs to the terpene synthase family. Tpsc subfamily. It depends on Mg(2+) as a cofactor. In terms of tissue distribution, highly expressed in roots, and, at low levels, in stems and leaves.

Its subcellular location is the plastid. It localises to the chloroplast. The enzyme catalyses (2E,6E,10E)-geranylgeranyl diphosphate = (+)-copalyl diphosphate. It participates in secondary metabolite biosynthesis; terpenoid biosynthesis. Involved in the biosynthesis of ent-kaurene diterpenoids natural products such as oridonin, miltiradiene, eriocalyxin B and nezukol, known to exhibit antitumor, anti-inflammatory and antibacterial activities. Catalyzes the conversion of (2E,6E,10E)-geranylgeranyl diphosphate (GGPP) to (+)-copalyl diphosphate ((+)-CPP). This is Copalyl diphosphate synthase 1, chloroplastic from Isodon rubescens (Rabdosia rubescens).